A 355-amino-acid chain; its full sequence is Peptide chain release factor 1 (355 aa).

N5-methylglutamine is present on Q230.

It belongs to the prokaryotic/mitochondrial release factor family. In terms of processing, methylated by PrmC. Methylation increases the termination efficiency of RF1.

It localises to the cytoplasm. Functionally, peptide chain release factor 1 directs the termination of translation in response to the peptide chain termination codons UAG and UAA. The polypeptide is Peptide chain release factor 1 (Geotalea uraniireducens (strain Rf4) (Geobacter uraniireducens)).